The following is a 466-amino-acid chain: MTYAPVKDVLSGKLAVDSEVTVRGWIRTRRDSKAGISFLAIYDGSCFDPIQAVVPNNLNNYNDEVLKLTTGCSVEVTGKIVASPAAGQAFELAATDVKVVGWVEDADTYPMAKTRHSIEYLREVAHLRPRTNVIGAVARVRHSLSQAIHRFYHEQGYYWLSAPLITASDCEGAGEMFRVSTLDLANLPRTESGDVDFNEDFFGKETFLTVSGQLNGEAYACALSKIYTFGPTFRAENSNTSRHLAEFWMVEPEVAFADLNDIAKLAEDMLKYVFAAVLEERRDDLEFFASRIDKDVINRLEQFVSSDFAQVDYTDAIQILLDSGREFEFPVEWGIDMSSEHERFLAEEHFKAPVIVKNYPKDIKAFYMRMNEDGKTVAAMDVLAPGIGEIIGGSQREERLDVLDARMVEMGIDPEHMNWYRDLRRYGTVPHAGFGLGFERLVSYVTGMGNVRDVIPFPRTPRNANF.

This sequence belongs to the class-II aminoacyl-tRNA synthetase family. In terms of assembly, homodimer.

It is found in the cytoplasm. The catalysed reaction is tRNA(Asn) + L-asparagine + ATP = L-asparaginyl-tRNA(Asn) + AMP + diphosphate + H(+). This is Asparagine--tRNA ligase from Vibrio vulnificus (strain YJ016).